Consider the following 81-residue polypeptide: Large ribosomal subunit protein bL31B (81 aa).

The protein belongs to the bacterial ribosomal protein bL31 family. Type B subfamily. As to quaternary structure, part of the 50S ribosomal subunit.

The protein is Large ribosomal subunit protein bL31B (rpmE2) of Lactiplantibacillus plantarum (strain ATCC BAA-793 / NCIMB 8826 / WCFS1) (Lactobacillus plantarum).